A 272-amino-acid chain; its full sequence is Phosphate import ATP-binding protein PstB (272 aa).

An ABC transporter domain is found at 18–257 (VSMQNVTISY…FNDTQSIFNS (240 aa)). Position 50–57 (50–57 (GPSGCGKS)) interacts with ATP.

This sequence belongs to the ABC transporter superfamily. Phosphate importer (TC 3.A.1.7) family. As to quaternary structure, the complex is composed of two ATP-binding proteins (PstB), two transmembrane proteins (PstC and PstA) and a solute-binding protein (PstS).

It is found in the cell inner membrane. It catalyses the reaction phosphate(out) + ATP + H2O = ADP + 2 phosphate(in) + H(+). Part of the ABC transporter complex PstSACB involved in phosphate import. Responsible for energy coupling to the transport system. The protein is Phosphate import ATP-binding protein PstB of Synechococcus sp. (strain CC9902).